We begin with the raw amino-acid sequence, 97 residues long: MNLRPLHDRVIVKRLDQETKTASGIVIPDAAAEKPDQGEVLAIGPGKRDDKGAPIALDVKVGDRVLFGKYAGQTVKVDGQELLVMREEDIMAVVNAK.

It belongs to the GroES chaperonin family. In terms of assembly, heptamer of 7 subunits arranged in a ring. Interacts with the chaperonin GroEL.

The protein resides in the cytoplasm. In terms of biological role, together with the chaperonin GroEL, plays an essential role in assisting protein folding. The GroEL-GroES system forms a nano-cage that allows encapsulation of the non-native substrate proteins and provides a physical environment optimized to promote and accelerate protein folding. GroES binds to the apical surface of the GroEL ring, thereby capping the opening of the GroEL channel. The sequence is that of Co-chaperonin GroES from Burkholderia cepacia (Pseudomonas cepacia).